Here is a 445-residue protein sequence, read N- to C-terminus: Probable protein phosphatase 2C 14 (445 aa).

Residues 120–440 (GFGVVSRNGK…DDITVVIIDL (321 aa)) enclose the PPM-type phosphatase domain. Mn(2+)-binding residues include Asp-156, Gly-157, and Asp-318. Positions 384–404 (NSENESPSLNREIGSSPSKSP) are disordered. Polar residues predominate over residues 390–404 (PSLNREIGSSPSKSP). Asp-431 contacts Mn(2+).

Belongs to the PP2C family. Mg(2+) serves as cofactor. Requires Mn(2+) as cofactor.

It carries out the reaction O-phospho-L-seryl-[protein] + H2O = L-seryl-[protein] + phosphate. The catalysed reaction is O-phospho-L-threonyl-[protein] + H2O = L-threonyl-[protein] + phosphate. The polypeptide is Probable protein phosphatase 2C 14 (Arabidopsis thaliana (Mouse-ear cress)).